The primary structure comprises 461 residues: tRNA modification GTPase MnmE (461 aa).

Residues Lys-32, Glu-89, and Lys-128 each coordinate (6S)-5-formyl-5,6,7,8-tetrahydrofolate. Residues 224-387 (GHALSIVGKP…LGQKISAFFP (164 aa)) enclose the TrmE-type G domain. Residue Asn-234 participates in K(+) binding. GTP is bound by residues 234–239 (NAGKSS), 253–259 (SDIKGTT), and 278–281 (DTAG). Ser-238 serves as a coordination point for Mg(2+). K(+)-binding residues include Ser-253, Ile-255, and Thr-258. Position 259 (Thr-259) interacts with Mg(2+). Lys-461 lines the (6S)-5-formyl-5,6,7,8-tetrahydrofolate pocket.

It belongs to the TRAFAC class TrmE-Era-EngA-EngB-Septin-like GTPase superfamily. TrmE GTPase family. Homodimer. Heterotetramer of two MnmE and two MnmG subunits. K(+) serves as cofactor.

The protein localises to the cytoplasm. Its function is as follows. Exhibits a very high intrinsic GTPase hydrolysis rate. Involved in the addition of a carboxymethylaminomethyl (cmnm) group at the wobble position (U34) of certain tRNAs, forming tRNA-cmnm(5)s(2)U34. In Helicobacter pylori (strain HPAG1), this protein is tRNA modification GTPase MnmE.